A 331-amino-acid chain; its full sequence is tRNA N6-adenosine threonylcarbamoyltransferase (331 aa).

Positions 108, 112, and 129 each coordinate a divalent metal cation. Substrate-binding positions include 129–133 (YASGG), D161, G176, E180, and N261. D289 lines the a divalent metal cation pocket.

This sequence belongs to the KAE1 / TsaD family. As to quaternary structure, component of the EKC/KEOPS complex composed of at least BUD32, CGI121, GON7, KAE1 and PCC1; the whole complex dimerizes. A divalent metal cation serves as cofactor.

It localises to the cytoplasm. The protein localises to the nucleus. The catalysed reaction is L-threonylcarbamoyladenylate + adenosine(37) in tRNA = N(6)-L-threonylcarbamoyladenosine(37) in tRNA + AMP + H(+). Its function is as follows. Component of the EKC/KEOPS complex that is required for the formation of a threonylcarbamoyl group on adenosine at position 37 (t(6)A37) in tRNAs that read codons beginning with adenine. The complex is probably involved in the transfer of the threonylcarbamoyl moiety of threonylcarbamoyl-AMP (TC-AMP) to the N6 group of A37. KAE1 likely plays a direct catalytic role in this reaction, but requires other protein(s) of the complex to fulfill this activity. The EKC/KEOPS complex also promotes both telomere uncapping and telomere elongation. The complex is required for efficient recruitment of transcriptional coactivators. This is tRNA N6-adenosine threonylcarbamoyltransferase from Encephalitozoon cuniculi (strain GB-M1) (Microsporidian parasite).